Consider the following 287-residue polypeptide: Protease HtpX (287 aa).

The next 2 helical transmembrane spans lie at 4–24 (IFLLIATNLAVLLVASIVMSI) and 33–53 (GGLLVFAAIFGFGGAFISLAI). Histidine 139 provides a ligand contact to Zn(2+). Glutamate 140 is a catalytic residue. Zn(2+) is bound at residue histidine 143. The next 2 membrane-spanning stretches (helical) occupy residues 154 to 174 (LIQGVVNTFVIFAARVVAGII) and 195 to 215 (AVVFVLDMLFGILASIIVAYF). Glutamate 220 is a binding site for Zn(2+).

The protein belongs to the peptidase M48B family. The cofactor is Zn(2+).

Its subcellular location is the cell inner membrane. In Shewanella baltica (strain OS185), this protein is Protease HtpX.